We begin with the raw amino-acid sequence, 151 residues long: Small ribosomal subunit protein uS19 (151 aa).

An N-acetylalanine modification is found at A2.

Belongs to the universal ribosomal protein uS19 family.

Its function is as follows. Negatively regulates lifespan. The chain is Small ribosomal subunit protein uS19 from Caenorhabditis elegans.